The following is a 238-amino-acid chain: Large ribosomal subunit protein uL2 (238 aa).

The span at 1–11 shows a compositional bias: polar residues; the sequence is MGKRLISQNRG. Disordered regions lie at residues 1–22 and 202–223; these read MGKR…APSH and FGGG…APPG.

The protein belongs to the universal ribosomal protein uL2 family. In terms of assembly, part of the 50S ribosomal subunit. Forms a bridge to the 30S subunit in the 70S ribosome.

One of the primary rRNA binding proteins. Required for association of the 30S and 50S subunits to form the 70S ribosome, for tRNA binding and peptide bond formation. It has been suggested to have peptidyltransferase activity; this is somewhat controversial. Makes several contacts with the 16S rRNA in the 70S ribosome. The protein is Large ribosomal subunit protein uL2 of Methanosarcina acetivorans (strain ATCC 35395 / DSM 2834 / JCM 12185 / C2A).